Reading from the N-terminus, the 201-residue chain is Probable quinol oxidase subunit 3 (201 aa).

Transmembrane regions (helical) follow at residues 20–40 (LGFWIFITAEFALFGTLFATL), 62–82 (LVLIMTFALLFSSYTCGIAIY), 91–111 (LMMFWMIITLLLGLVFVGFEI), 133–153 (FFILLGTHGCHVSLGIVWAIC), and 172–192 (FIVSLYWHFLDVVWVFIFTAV).

This sequence belongs to the cytochrome c oxidase subunit 3 family.

The protein resides in the cell membrane. The catalysed reaction is 2 a quinol + O2 = 2 a quinone + 2 H2O. Functionally, catalyzes quinol oxidation with the concomitant reduction of oxygen to water. This Staphylococcus aureus (strain MSSA476) protein is Probable quinol oxidase subunit 3 (qoxC).